We begin with the raw amino-acid sequence, 227 residues long: Cytochrome c oxidase subunit 2 (227 aa).

Residues 1 to 26 (MATWSNFNLQNSASPLMEQIIFFHDH) are Mitochondrial intermembrane-facing. Residues 27–51 (TLVILIMITILVGYLMISLFFNSYI) traverse the membrane as a helical segment. At 52–62 (NRFLLEGQMIE) the chain is on the mitochondrial matrix side. The helical transmembrane segment at 63–81 (LIWTILPAITLIFIALPSL) threads the bilayer. The Mitochondrial intermembrane segment spans residues 82–227 (RLLYLLDELN…NFINWINNYS (146 aa)). Cu cation contacts are provided by His161, Cys196, Glu198, Cys200, His204, and Met207. Glu198 contributes to the Mg(2+) binding site.

It belongs to the cytochrome c oxidase subunit 2 family. Component of the cytochrome c oxidase (complex IV, CIV), a multisubunit enzyme composed of a catalytic core of 3 subunits and several supernumerary subunits. The complex exists as a monomer or a dimer and forms supercomplexes (SCs) in the inner mitochondrial membrane with ubiquinol-cytochrome c oxidoreductase (cytochrome b-c1 complex, complex III, CIII). It depends on Cu cation as a cofactor.

The protein resides in the mitochondrion inner membrane. The catalysed reaction is 4 Fe(II)-[cytochrome c] + O2 + 8 H(+)(in) = 4 Fe(III)-[cytochrome c] + 2 H2O + 4 H(+)(out). Component of the cytochrome c oxidase, the last enzyme in the mitochondrial electron transport chain which drives oxidative phosphorylation. The respiratory chain contains 3 multisubunit complexes succinate dehydrogenase (complex II, CII), ubiquinol-cytochrome c oxidoreductase (cytochrome b-c1 complex, complex III, CIII) and cytochrome c oxidase (complex IV, CIV), that cooperate to transfer electrons derived from NADH and succinate to molecular oxygen, creating an electrochemical gradient over the inner membrane that drives transmembrane transport and the ATP synthase. Cytochrome c oxidase is the component of the respiratory chain that catalyzes the reduction of oxygen to water. Electrons originating from reduced cytochrome c in the intermembrane space (IMS) are transferred via the dinuclear copper A center (CU(A)) of subunit 2 and heme A of subunit 1 to the active site in subunit 1, a binuclear center (BNC) formed by heme A3 and copper B (CU(B)). The BNC reduces molecular oxygen to 2 water molecules using 4 electrons from cytochrome c in the IMS and 4 protons from the mitochondrial matrix. This is Cytochrome c oxidase subunit 2 (COII) from Choristoneura fumiferana (Spruce budworm moth).